A 250-amino-acid polypeptide reads, in one-letter code: UPF0259 membrane protein Spro_2675 (250 aa).

6 consecutive transmembrane segments (helical) span residues 23–43 (ILMLALLTAFISVLLNQAFSP), 87–107 (AATFSALVGNVLLVGGMLTLI), 132–152 (LLLLLFICTLLIQLGLTLFVV), 156–176 (IMAIAFSLAPVITATDKKGVF), 192–212 (VIVPAMMLWLAAKLLVLFMVS), and 222–242 (ASVVLTALSNLVSALLLIYLF).

Belongs to the UPF0259 family.

Its subcellular location is the cell inner membrane. This Serratia proteamaculans (strain 568) protein is UPF0259 membrane protein Spro_2675.